We begin with the raw amino-acid sequence, 292 residues long: 4-hydroxy-tetrahydrodipicolinate synthase (292 aa).

Thr-45 contacts pyruvate. Tyr-133 serves as the catalytic Proton donor/acceptor. Catalysis depends on Lys-161, which acts as the Schiff-base intermediate with substrate. Ile-203 provides a ligand contact to pyruvate.

Belongs to the DapA family. Homotetramer; dimer of dimers.

It localises to the cytoplasm. The catalysed reaction is L-aspartate 4-semialdehyde + pyruvate = (2S,4S)-4-hydroxy-2,3,4,5-tetrahydrodipicolinate + H2O + H(+). Its pathway is amino-acid biosynthesis; L-lysine biosynthesis via DAP pathway; (S)-tetrahydrodipicolinate from L-aspartate: step 3/4. Catalyzes the condensation of (S)-aspartate-beta-semialdehyde [(S)-ASA] and pyruvate to 4-hydroxy-tetrahydrodipicolinate (HTPA). In Sodalis glossinidius (strain morsitans), this protein is 4-hydroxy-tetrahydrodipicolinate synthase.